Here is a 325-residue protein sequence, read N- to C-terminus: Inner membrane protein YrbG (325 aa).

At 1 to 5 (MLLAT) the chain is on the periplasmic side. The chain crosses the membrane as a helical span at residues 6–26 (ALLIVGLLLVVYSADRLVFAA). The Cytoplasmic segment spans residues 27–37 (SILCRTFGIPP). Residues 38–58 (LIIGMTVVSIGTSLPEVIVSL) traverse the membrane as a helical segment. Over 59–67 (AASLHEQRD) the chain is Periplasmic. The chain crosses the membrane as a helical span at residues 68-88 (LAVGTALGSNIINILLILGLA). Topologically, residues 89 to 104 (ALVRPFTVHSDVLRRE) are cytoplasmic. A helical transmembrane segment spans residues 105 to 125 (LPLMLLVSVVAGSVLYDGQLS). A topological domain (periplasmic) is located at residue arginine 126. Residues 127–147 (SDGIFLLFLAVLWLLFIVKLA) form a helical membrane-spanning segment. Residues 148–169 (RQAERQGTDSLTREQLAELPRD) are Cytoplasmic-facing. The helical transmembrane segment at 170 to 190 (GGLPVAFLWLGIALIIMPVAT) threads the bilayer. Over 191-198 (RMVVDNAT) the chain is Periplasmic. Residues 199–219 (VLANYFAISELTMGLTAIAIG) traverse the membrane as a helical segment. Residues 220-243 (TSLPELATAIAGVRKGENDIAVGN) lie on the Cytoplasmic side of the membrane. A helical transmembrane segment spans residues 244-264 (IIGANIFNIVIVLGLPALITP). At 265–269 (GEIDP) the chain is on the periplasmic side. Residues 270–290 (LAYSRDYSVMLLVSIIFALLC) form a helical membrane-spanning segment. Residues 291 to 302 (WRRSPQPGRGVG) lie on the Cytoplasmic side of the membrane. A helical transmembrane segment spans residues 303–323 (VLLTGGFIVWLAMLYWLSPIL). Residues 324–325 (VE) are Periplasmic-facing.

This sequence belongs to the Ca(2+):cation antiporter (CaCA) (TC 2.A.19) family.

The protein localises to the cell inner membrane. The polypeptide is Inner membrane protein YrbG (yrbG) (Escherichia coli (strain K12)).